The chain runs to 142 residues: Large ribosomal subunit protein uL13 (142 aa).

This sequence belongs to the universal ribosomal protein uL13 family. As to quaternary structure, part of the 50S ribosomal subunit.

Its function is as follows. This protein is one of the early assembly proteins of the 50S ribosomal subunit, although it is not seen to bind rRNA by itself. It is important during the early stages of 50S assembly. The chain is Large ribosomal subunit protein uL13 from Hydrogenovibrio crunogenus (strain DSM 25203 / XCL-2) (Thiomicrospira crunogena).